A 611-amino-acid polypeptide reads, in one-letter code: MAPVRDPNTLSNYNEWRTKHTTADFKVDFTAKCLRGSVVLELESQTDKASKEIILDSSYVDVSAITLNSTPSQWEVRDRTGPSGSPVRVAVPNGAGKGEVVKLEIELATTDKCTALQWLTPAQTSNKKAPFMFSQCQAIHARSIFPCQDTPDVKSTYDFIIRSPHVVVASGVPVPGEPESVGEDKVYKFHQKVPIPSYLFAVASGDIASAKIGRCSSVATGPNELKASQWELEDDMDKFLDAAEKIVFPYQWGEYNVLVLPPSFPYGGMENPIFTFATPTIISGDRQNIDVIAHELAHSWSGNLVTSCSWEHFWLNEGWTVYLERRILASIHKNDSYFDFSAIIGWKHLEEAIEEFGKDHEYTKLSIKHDGIDPDDAFSSVPYEKGFHFIWSLDRLVGRENFDKFIPHYFSKWQNKSLDSFEFKDTFLEFFSAPEYSKLKDKISQIDWEGRFFNPGLPPKPEFDTTLVDGCFQLANKWKSKDFSPSPSDTSSWTGNQLLVFLNVVQDFEEPLTAEQSQNMGKIYALADSKNVELKAAYYQIAMKAKDTTSYPGVAELLGNVGRMKFVRTLFRTLNKVDRDLAVKTFQKNRDFYHPICRQLVEKDLGLGESK.

A peptide-binding positions include 135-137 and 265-270; these read QCQ and PYGGME. Residue H294 coordinates Zn(2+). The active-site Proton acceptor is the E295. Residues H298 and E317 each coordinate Zn(2+). The active-site Proton donor is Y383.

Belongs to the peptidase M1 family. It depends on Zn(2+) as a cofactor.

It localises to the cytoplasm. Its subcellular location is the nucleus. It catalyses the reaction an epoxide + H2O = an ethanediol. Functionally, aminopeptidase that preferentially cleaves di- and tripeptides. Also has low epoxide hydrolase activity (in vitro). Can hydrolyze the epoxide leukotriene LTA(4) but it forms preferentially 5,6-dihydroxy-7,9,11,14-eicosatetraenoic acid rather than the cytokine leukotriene B(4) as the product compared to the homologous mammalian enzyme (in vitro). The protein is Leucine aminopeptidase 2 of Chaetomium globosum (strain ATCC 6205 / CBS 148.51 / DSM 1962 / NBRC 6347 / NRRL 1970) (Soil fungus).